Reading from the N-terminus, the 177-residue chain is ATP synthase subunit delta (177 aa).

This sequence belongs to the ATPase delta chain family. As to quaternary structure, F-type ATPases have 2 components, F(1) - the catalytic core - and F(0) - the membrane proton channel. F(1) has five subunits: alpha(3), beta(3), gamma(1), delta(1), epsilon(1). F(0) has three main subunits: a(1), b(2) and c(10-14). The alpha and beta chains form an alternating ring which encloses part of the gamma chain. F(1) is attached to F(0) by a central stalk formed by the gamma and epsilon chains, while a peripheral stalk is formed by the delta and b chains.

The protein localises to the cell inner membrane. In terms of biological role, f(1)F(0) ATP synthase produces ATP from ADP in the presence of a proton or sodium gradient. F-type ATPases consist of two structural domains, F(1) containing the extramembraneous catalytic core and F(0) containing the membrane proton channel, linked together by a central stalk and a peripheral stalk. During catalysis, ATP synthesis in the catalytic domain of F(1) is coupled via a rotary mechanism of the central stalk subunits to proton translocation. Its function is as follows. This protein is part of the stalk that links CF(0) to CF(1). It either transmits conformational changes from CF(0) to CF(1) or is implicated in proton conduction. This chain is ATP synthase subunit delta, found in Enterobacter sp. (strain 638).